The sequence spans 499 residues: CD-NTase-associated protein 4 (499 aa).

The interval 1–226 is N-terminal endonuclease domain; that stretch reads MATSVLANWH…DFRFDGAARA (226 aa). Catalysis depends on residues aspartate 49 and glutamine 72. Residue aspartate 49 participates in Mg(2+) binding. Isoleucine 73 contributes to the Mg(2+) binding site. Lysine 74 is a catalytic residue. The segment at 258–464 is C-terminal SAVED domain; that stretch reads FRNVALRSFS…HIFSAAPNAV (207 aa).

Belongs to the Cap4 nuclease family. A monomer in the absence of ligand, in its presence it forms oligomers. The cofactor is Mg(2+).

With respect to regulation, DNase activity is activated upon ligand binding (cAAG). Inhibited by EDTA. Functionally, effector DNase of a CBASS antivirus system. CBASS (cyclic oligonucleotide-based antiphage signaling system) provides immunity against bacteriophages. The CD-NTase protein (CdnD) synthesizes cyclic nucleotides in response to infection; these serve as specific second messenger signals. The signals activate a diverse range of effectors, leading to bacterial cell death and thus abortive phage infection. A type II-C(AAG) CBASS system. Its function is as follows. Binds second messenger 3',3',3'-cyclic AMP-AMP-GMP (cAAG). In the presence of cAAG (synthesized by the cognate CD-NTase protein in the CBASS operon), endonucleolytically degrades dsDNA to approximately 17 bp length fragments, with a preference for 5'-C|NG sites. Only binds DNA in the presence of cAAG. Not activated by c-di-AMP, c-di-GMP, 3',3'-cyclic GMP-AMP (cGAMP) or the second messenger of A.baumanii strain ATCC 27244. Protects E.coli against phage T2 infection. When the cdnD-cap2-cap3-cap4 operon is introduced in E.coli there is a more than 10(3) decrease in the efficiency of T2 plaque formation. The operon does not protect against phage T5 and only about 10-fold against T7. Expression of cdnD-cap4 alone protects E.coli against phage T2 infection. The sequence is that of CD-NTase-associated protein 4 from Enterobacter hormaechei subsp. hoffmannii (strain UCI 50).